A 449-amino-acid chain; its full sequence is Na(+)/H(+) antiporter NhaA (449 aa).

The next 12 membrane-spanning stretches (helical) occupy residues 30–50 (IFLIIATIVALLLANSQWAGA), 69–89 (FGLTIEEWINDGLMAIFFLVA), 112–132 (LLAALGGMAVPALIFISLNLG), 138–158 (GWGIPMATDIAYSLGIIGLLG), 168–188 (FLIALAIADDIGAILVIALFY), 192–212 (LSWIYLGSGMGAFGLLLLMNW), 218–238 (LIWYIIIGIILWYCFLNSGIH), 241–261 (IAGVLFAITIPIVPKLDSKIL), 312–332 (SLVDFNAFFIIPIFAVANAGV), 348–368 (LGILLGLAIGKVTGIGIFTLI), 386–406 (IIGIGMIAGIGFTMSLFITNL), and 419–439 (ISILIASLLAAIGGAVILLLT).

Belongs to the NhaA Na(+)/H(+) (TC 2.A.33) antiporter family.

It localises to the cell inner membrane. It catalyses the reaction Na(+)(in) + 2 H(+)(out) = Na(+)(out) + 2 H(+)(in). Functionally, na(+)/H(+) antiporter that extrudes sodium in exchange for external protons. This chain is Na(+)/H(+) antiporter NhaA, found in Christiangramia forsetii (strain DSM 17595 / CGMCC 1.15422 / KT0803) (Gramella forsetii).